The primary structure comprises 302 residues: Citrate lyase subunit beta (302 aa).

2 residues coordinate substrate: arginine 76 and glutamate 139. Positions 139 and 166 each coordinate Mg(2+).

The protein belongs to the HpcH/HpaI aldolase family. Citrate lyase beta subunit subfamily. Oligomer with a subunit composition of (alpha,beta,gamma)6. The cofactor is Mg(2+).

The protein resides in the cytoplasm. The enzyme catalyses citrate = oxaloacetate + acetate. The catalysed reaction is (3S)-citryl-CoA = oxaloacetate + acetyl-CoA. In terms of biological role, represents a citryl-ACP lyase. In Escherichia coli O6:H1 (strain CFT073 / ATCC 700928 / UPEC), this protein is Citrate lyase subunit beta (citE).